The sequence spans 503 residues: MTITPVYTTFTPTKTPIKFFMAGLTFLIAHISHADDGRTDNQEPINQEIATLEPIINHAQPELLSHDALTPKIEPILAQTPNPAEDTLIADEALLLDNPDLLNHALNSAVMTNHMAGVHALLPIYQKLPKDHQNGILLGYANALAALDKGNAKKAIDELRRIIAIMPEYNVVRFHLARALFMDKQNEAALDQFNKLHADNLPEEVRQVVGQYRQALKQRDSWTWQVGMNLAKEDNINQTPKNTTQGQWTFDKPIDAITLSYQLGADKKWSLPKGAYVGANAQIYGKHHQNHKKYNDHWGRLGANLGFADAKKDLSIETYGEKRFYGHERYTDTIGIRMSVDYRINPKFQSLNAIDISRLTNHRTPRADSNNTLYSTSLIYYPNATRYYLLGADFYDEKVPQDPSDSYQRRGIRTAWGQEWAGGLSSRAQISINKRHYQGANLTSGGQIRHDKQMQASLSLWHRDIHKWGITPRLTISTNINKSNDIKANYHKNQMFVEFSRIF.

Residues 1–34 (MTITPVYTTFTPTKTPIKFFMAGLTFLIAHISHA) form the signal peptide. Positions 38–220 (RTDNQEPINQ…QYRQALKQRD (183 aa)) are N-terminal domain. One copy of the TPR repeat lies at 136-169 (ILLGYANALAALDKGNAKKAIDELRRIIAIMPEY). The tract at residues 221-503 (SWTWQVGMNL…QMFVEFSRIF (283 aa)) is C-terminal probable beta barrel. 14 beta stranded membrane passes run 222 to 232 (WTWQVGMNLAK), 259 to 270 (LSYQLGADKKWS), 275 to 285 (AYVGANAQIYG), 299 to 308 (GRLGANLGFA), 313 to 322 (DLSIETYGEK), 334 to 343 (IGIRMSVDYR), 348 to 358 (FQSLNAIDISR), 372 to 382 (TLYSTSLIYYP), 387 to 396 (YYLLGADFYD), 410 to 419 (RGIRTAWGQE), 424 to 434 (LSSRAQISINK), 454 to 463 (MQASLSLWHR), 470 to 479 (ITPRLTISTN), and 493 to 503 (NQMFVEFSRIF).

Belongs to the Slam family.

The protein localises to the cell outer membrane. Required for correct export to the cell surface of some cell outer membrane lipoproteins (tested with TpbP) upon heterologous expression in E.coli and probably also in Moraxella. This is Surface lipoprotein assembly modifier from Moraxella catarrhalis (Branhamella catarrhalis).